The following is an 84-amino-acid chain: MDLDYCIICGKPTTGNLYCSRECHLQDCPGCGSTSEQCSYSKSADLHMLSSQYLDHFRRRSSMPSPSTSSSLLNGFVASRLAVL.

This sequence belongs to the ecl1 family.

It localises to the nucleus. Its function is as follows. Involved in chronological cell aging. The polypeptide is Extender of the chronological lifespan protein 2 (ecl2) (Schizosaccharomyces pombe (strain 972 / ATCC 24843) (Fission yeast)).